The following is a 181-amino-acid chain: Translationally-controlled tumor protein homolog (181 aa).

The TCTP domain occupies 1–181 (MLIFKDAFTD…VKEALVEEKQ (181 aa)).

The protein belongs to the TCTP family.

Its subcellular location is the cytoplasm. Its function is as follows. Involved in calcium binding and microtubule stabilization. This is Translationally-controlled tumor protein homolog from Wuchereria bancrofti.